Here is a 130-residue protein sequence, read N- to C-terminus: Small ribosomal subunit protein uS11c (130 aa).

The protein belongs to the universal ribosomal protein uS11 family. Part of the 30S ribosomal subunit.

The protein localises to the plastid. The protein resides in the chloroplast. The polypeptide is Small ribosomal subunit protein uS11c (Bigelowiella natans (Pedinomonas minutissima)).